Reading from the N-terminus, the 141-residue chain is Nucleoside diphosphate kinase (141 aa).

ATP-binding residues include Lys11, Phe59, Arg87, Thr93, Arg104, and Asn114. His117 acts as the Pros-phosphohistidine intermediate in catalysis.

This sequence belongs to the NDK family. In terms of assembly, homotetramer. Mg(2+) is required as a cofactor.

The protein localises to the cytoplasm. The enzyme catalyses a 2'-deoxyribonucleoside 5'-diphosphate + ATP = a 2'-deoxyribonucleoside 5'-triphosphate + ADP. It carries out the reaction a ribonucleoside 5'-diphosphate + ATP = a ribonucleoside 5'-triphosphate + ADP. Its function is as follows. Major role in the synthesis of nucleoside triphosphates other than ATP. The ATP gamma phosphate is transferred to the NDP beta phosphate via a ping-pong mechanism, using a phosphorylated active-site intermediate. This chain is Nucleoside diphosphate kinase, found in Pseudomonas putida (strain W619).